Consider the following 149-residue polypeptide: Large ribosomal subunit protein bL9 (149 aa).

Belongs to the bacterial ribosomal protein bL9 family.

Functionally, binds to the 23S rRNA. The polypeptide is Large ribosomal subunit protein bL9 (Syntrophus aciditrophicus (strain SB)).